The following is a 184-amino-acid chain: dCTP deaminase (184 aa).

107–112 (KSTIAR) is a binding site for dCTP. E133 acts as the Proton donor/acceptor in catalysis. Q152, Y166, and Q176 together coordinate dCTP.

It belongs to the dCTP deaminase family. Homotrimer.

The catalysed reaction is dCTP + H2O + H(+) = dUTP + NH4(+). The protein operates within pyrimidine metabolism; dUMP biosynthesis; dUMP from dCTP (dUTP route): step 1/2. In terms of biological role, catalyzes the deamination of dCTP to dUTP. The sequence is that of dCTP deaminase from Roseiflexus castenholzii (strain DSM 13941 / HLO8).